We begin with the raw amino-acid sequence, 983 residues long: Receptor-like protein 19 (983 aa).

An N-terminal signal peptide occupies residues 1-25; the sequence is MMKGYITLSFLIILIFNFLDEFAAS. The Extracellular portion of the chain corresponds to 26 to 937; the sequence is TRHLCDPDQS…EEDEEEVISW (912 aa). N-linked (GlcNAc...) asparagine glycans are attached at residues asparagine 66 and asparagine 102. LRR repeat units follow at residues 82–108, 111–135, 136–159, 161–183, 184–207, 209–231, 232–255, 256–281, 283–302, 303–327, 328–351, 353–375, 376–399, 401–424, 425–448, 450–474, 475–498, 501–524, 525–548, 550–571, 578–602, 603–628, 629–652, 654–674, 675–700, 702–720, 721–744, 793–817, 818–840, 841–865, and 867–890; these read FGDV…LFRL, LRFL…LETL, SNLT…IGNL, HLIF…LGYL, SHLT…IGNL, YLTT…LGSL, FHLT…LGNL, SHLT…NLSC, TSFI…SFGN, LNQL…LLNL, RKLS…MSSL, NLKL…LFNI, PSLK…NISS, SNLT…ISKL, VNLK…IFSH, KSIE…ILSS, FKLL…SLSN, LVLI…LRSQ, ELML…LWML, VLNY…TKLG, PPAM…ICEL, PYLS…NIQS, PYLQ…IFES, ISLD…LSHI, SSLG…SLQE, QVLV…KTQF, SKLR…FFVN, LKVF…IGLL, KELH…SMGN, LMAL…LGKL, and YLAY…QFQT. N-linked (GlcNAc...) asparagine glycosylation is found at asparagine 137, asparagine 158, asparagine 171, asparagine 190, asparagine 195, and asparagine 206. Residues asparagine 254 and asparagine 278 are each glycosylated (N-linked (GlcNAc...) asparagine). N-linked (GlcNAc...) asparagine glycosylation occurs at asparagine 347. N-linked (GlcNAc...) asparagine glycosylation is found at asparagine 389, asparagine 396, and asparagine 402. Residues asparagine 456, asparagine 461, asparagine 492, and asparagine 498 are each glycosylated (N-linked (GlcNAc...) asparagine). 4 N-linked (GlcNAc...) asparagine glycosylation sites follow: asparagine 555, asparagine 558, asparagine 590, and asparagine 616. Residues asparagine 734 and asparagine 744 are each glycosylated (N-linked (GlcNAc...) asparagine). Residue asparagine 824 is glycosylated (N-linked (GlcNAc...) asparagine). Asparagine 872 carries an N-linked (GlcNAc...) asparagine glycan. Residues 938–958 form a helical membrane-spanning segment; the sequence is IAAVIGFILGTALGLTFGCIL. Topologically, residues 959-983 are cytoplasmic; the sequence is FSYKPDWFKNPFVRDKRRNIGTITH.

This sequence belongs to the RLP family.

The protein resides in the cell membrane. In Arabidopsis thaliana (Mouse-ear cress), this protein is Receptor-like protein 19.